Here is a 619-residue protein sequence, read N- to C-terminus: Pescadillo homolog (619 aa).

A disordered region spans residues 303 to 324; the sequence is ADKDQKDQDTIEDAEEVTEPTV. The segment covering 312–324 has biased composition (acidic residues); sequence TIEDAEEVTEPTV. Positions 353-452 constitute a BRCT domain; it reads PTSQLFSKFI…ELVSVGDYAP (100 aa). A disordered region spans residues 456–567; sequence LPPHLSPWGD…STKAALTPEE (112 aa). Coiled-coil stretches lie at residues 472 to 560 and 588 to 619; these read NAKA…ASTK and MQYGIEKKTNRVDELTKKRKQLEKKKKQLKDV. The span at 480–522 shows a compositional bias: acidic residues; it reads EAEEEEEEEEEDEEEEEEEEEIEVADGDEDQDDEEEEEIEDED. The segment covering 523–539 has biased composition (basic and acidic residues); sequence LKAQKELEMEVAGKKFS.

Belongs to the pescadillo family. Component of the NOP7 complex, composed of ERB1, NOP7 and YTM1. The complex is held together by ERB1, which interacts with NOP7 via its N-terminal domain and with YTM1 via a high-affinity interaction between the seven-bladed beta-propeller domains of the 2 proteins. The NOP7 complex associates with the 66S pre-ribosome.

The protein localises to the nucleus. It localises to the nucleolus. The protein resides in the nucleoplasm. Its function is as follows. Component of the NOP7 complex, which is required for maturation of the 25S and 5.8S ribosomal RNAs and formation of the 60S ribosome. The protein is Pescadillo homolog of Lodderomyces elongisporus (strain ATCC 11503 / CBS 2605 / JCM 1781 / NBRC 1676 / NRRL YB-4239) (Yeast).